The primary structure comprises 305 residues: MVDKLTHLKQLEAESIHIIREVAAEFDNPVMLYSIGKDSAVMLHLARKAFFPGKLPFPVMHVDTRWKFQEMYRFRDQMVEEMGLDLITHINPDGVAQGINPFTHGSAKHTDIMKTEGLKQALDKHGFDAAFGGARRDEEKSRAKERVYSFRDSKHRWDPKNQRPELWNVYNGNVNKGESIRVFPLSNWTELDIWQYIYLEGIPIVPLYFAAERDVIEKNGTLIMIDDERILEHLTDEEKSRIVKKKVRFRTLGCYPLTGAVESEATSLTDIIQEMLLTRTSERQGRVIDHDGAGSMEEKKRQGYF.

Belongs to the PAPS reductase family. CysD subfamily. In terms of assembly, heterodimer composed of CysD, the smaller subunit, and CysN.

It catalyses the reaction sulfate + ATP + H(+) = adenosine 5'-phosphosulfate + diphosphate. It functions in the pathway sulfur metabolism; hydrogen sulfide biosynthesis; sulfite from sulfate: step 1/3. In terms of biological role, with CysN forms the ATP sulfurylase (ATPS) that catalyzes the adenylation of sulfate producing adenosine 5'-phosphosulfate (APS) and diphosphate, the first enzymatic step in sulfur assimilation pathway. APS synthesis involves the formation of a high-energy phosphoric-sulfuric acid anhydride bond driven by GTP hydrolysis by CysN coupled to ATP hydrolysis by CysD. This chain is Sulfate adenylyltransferase subunit 2, found in Pseudomonas syringae pv. tomato (strain ATCC BAA-871 / DC3000).